We begin with the raw amino-acid sequence, 998 residues long: MVVTKPATQRPRLPSVGRLGLVDPQAAERMAQLGWYDHDDQAHVDLLWALSRAPDPDAALLALVRLAETPDAGWDELGAALLTERPLRGRLFAVLGSSLALGDHLVAQPRSWKLLRGNVSLPTHDELCAMFTGCVDEALADPGSAMVRLRTLYRDRLLVLAALDLAATVEDEPVLPFTVVAAHLSDLADAALAAALRVAEHNVCGDRTPPRLAVIAMGKCGARELNYVSDVDVIFVGERADTVTTRVASEMMRLASEAFFQVDAGLRPEGRSGELVRTVESHIAYYQRWAKTWEFQALLKARAAVGDAELGRRYLDALMPMVWVACEREDFVVEVQAMRRRVEQLVPADVRGREIKLGSGGLRDVEFAVQLLQLVHGRSDESLHVASTVDALAALGQGGYIGREDAANLTASYEFLRLLEHRLQLQRLKRTHLLPEADDEEAVRWLARAAHIRPDGRHDAAGVLREELRHQNLRVSQLHAKLFYQPLLESIGPAGLEIRHGMTSEAAERQLAALGYEGPQSALKHMSALVNQSGRRGRVQSVLLPRLLNWMSYAPDPDGGLLAYRRLSEALAGESWYLSTLRDKPAVARRLMHVLGTSAYVPDLLMRAPRVIQDYGDGPSGPRLLETDPAAVARALVASASRYSDPVRAIAGARTLRRRELARVASADLLGMLEVTDVCKALTSVWVAVLQAALDAMIRANLPDDGPQRGKAPAAIAVIGMGRLGGAELGYGSDADVMFVCEPAPGVDDSAAVRWAASVAEQVRTLLGTPSVDPPLDVDANLRPEGRNGPLVRTLASYAAYYEQWAQPWEIQALLRAHAVAGDAELGQRFLLMADKTRYPADGVSPEAVREIRRIKARVDAERLPRGADPNTHTKLGRGGLADIEWTVQLLQLLHAHEVPALHNTSTLECLDAIAEAGLVPADEVDLLRQAWLTATRARNALVLVRGKPTDQLPGPGRQLNAVAVAAGWPTDEGGEFLDNYLRVTRRAKAVVRKVFGS.

The adenylyl removase stretch occupies residues methionine 1–leucine 487. The tract at residues glycine 492–serine 998 is adenylyl transferase.

Belongs to the GlnE family. Requires Mg(2+) as cofactor.

The enzyme catalyses [glutamine synthetase]-O(4)-(5'-adenylyl)-L-tyrosine + phosphate = [glutamine synthetase]-L-tyrosine + ADP. It catalyses the reaction [glutamine synthetase]-L-tyrosine + ATP = [glutamine synthetase]-O(4)-(5'-adenylyl)-L-tyrosine + diphosphate. Its function is as follows. Involved in the regulation of glutamine synthetase GlnA, a key enzyme in the process to assimilate ammonia. When cellular nitrogen levels are high, the C-terminal adenylyl transferase (AT) inactivates GlnA by covalent transfer of an adenylyl group from ATP to specific tyrosine residue of GlnA, thus reducing its activity. Conversely, when nitrogen levels are low, the N-terminal adenylyl removase (AR) activates GlnA by removing the adenylyl group by phosphorolysis, increasing its activity. The regulatory region of GlnE binds the signal transduction protein PII (GlnB) which indicates the nitrogen status of the cell. The sequence is that of Bifunctional glutamine synthetase adenylyltransferase/adenylyl-removing enzyme from Mycobacterium avium (strain 104).